The following is a 569-amino-acid chain: 3-oxosteroid 1-dehydrogenase (569 aa).

10–39 (DVVVVGSGAAGMVAALTAAHQGLSTVVVEK) serves as a coordination point for FAD. The segment at 127–148 (PGGKPTGRSVEPKPFDANKLGP) is disordered.

Belongs to the FAD-dependent oxidoreductase 2 family. 3-oxosteroid dehydrogenase subfamily. FAD serves as cofactor.

It catalyses the reaction a 3-oxosteroid + A = a 3-oxo-Delta(1)-steroid + AH2. It carries out the reaction a 3-oxo-Delta(4)-steroid + A = a 3-oxo-Delta(1,4)-steroid + AH2. Catalyzes the elimination of the C-1 and C-2 hydrogen atoms of the A-ring from the polycyclic ring structure of 3-ketosteroids. Is also involved in the formation of 1,4-androstadiene-3,17-dione (ADD) from 4-androstene-3,17-dione (AD) to. This chain is 3-oxosteroid 1-dehydrogenase (ksdD), found in Mycolicibacterium smegmatis (strain ATCC 700084 / mc(2)155) (Mycobacterium smegmatis).